The chain runs to 422 residues: CinA-like protein (422 aa).

It belongs to the CinA family.

This is CinA-like protein from Mycolicibacterium gilvum (strain PYR-GCK) (Mycobacterium gilvum (strain PYR-GCK)).